The sequence spans 70 residues: uncharacterized protein (70 aa).

This is an uncharacterized protein from Methanocaldococcus jannaschii (strain ATCC 43067 / DSM 2661 / JAL-1 / JCM 10045 / NBRC 100440) (Methanococcus jannaschii).